The following is a 36-amino-acid chain: Zinc metalloproteinase-disintegrin-like VaH1 (36 aa).

Residues 1 to 36 (MVTKYSSIFMSPILSNPPILYFSDCSREXYQKXLTN) enclose the Peptidase M12B domain.

It belongs to the venom metalloproteinase (M12B) family. P-III subfamily. P-IIIa sub-subfamily. Monomer. Zn(2+) is required as a cofactor. In terms of processing, the N-terminus is blocked. Glycosylated. Expressed by the venom gland.

The protein resides in the secreted. With respect to regulation, inhibited by EDTA, but not inhibited by iodoacetamide, PMSF and pepstatin A. Snake venom zinc metalloprotease that exhibits strong hemorrhagic activity. It also degrades alpha-chain of fibrinogen (FGA), but not the beta- and the gamma-chains. Possesses potent azocaseinolytic activity and cleaves insulin B-chain, hydrolyzing it at positions Ala(14)-Leu(15), followed by Tyr(16)-Leu(17) and His(10)-Leu(11). In vivo, subcutaneous injection into mice induces strong hemorrhage. The chain is Zinc metalloproteinase-disintegrin-like VaH1 from Vipera ammodytes ammodytes (Western sand viper).